Consider the following 256-residue polypeptide: Phosphonates import ATP-binding protein PhnC (256 aa).

The 245-residue stretch at 3–247 (LELKNISKTY…VLHKEIFTNV (245 aa)) folds into the ABC transporter domain. ATP is bound at residue 36 to 43 (GLSGAGKS).

Belongs to the ABC transporter superfamily. Phosphonates importer (TC 3.A.1.9.1) family. As to quaternary structure, the complex is composed of two ATP-binding proteins (PhnC), two transmembrane proteins (PhnE) and a solute-binding protein (PhnD).

Its subcellular location is the cell inner membrane. It carries out the reaction phosphonate(out) + ATP + H2O = phosphonate(in) + ADP + phosphate + H(+). Part of the ABC transporter complex PhnCDE involved in phosphonates import. Responsible for energy coupling to the transport system. The polypeptide is Phosphonates import ATP-binding protein PhnC (Treponema denticola (strain ATCC 35405 / DSM 14222 / CIP 103919 / JCM 8153 / KCTC 15104)).